A 510-amino-acid chain; its full sequence is ATP synthase subunit alpha (510 aa).

169-176 lines the ATP pocket; it reads GDRQTGKT.

This sequence belongs to the ATPase alpha/beta chains family. As to quaternary structure, F-type ATPases have 2 components, CF(1) - the catalytic core - and CF(0) - the membrane proton channel. CF(1) has five subunits: alpha(3), beta(3), gamma(1), delta(1), epsilon(1). CF(0) has three main subunits: a(1), b(2) and c(9-12). The alpha and beta chains form an alternating ring which encloses part of the gamma chain. CF(1) is attached to CF(0) by a central stalk formed by the gamma and epsilon chains, while a peripheral stalk is formed by the delta and b chains.

It localises to the cell inner membrane. The enzyme catalyses ATP + H2O + 4 H(+)(in) = ADP + phosphate + 5 H(+)(out). In terms of biological role, produces ATP from ADP in the presence of a proton gradient across the membrane. The alpha chain is a regulatory subunit. The protein is ATP synthase subunit alpha of Rickettsia conorii (strain ATCC VR-613 / Malish 7).